The primary structure comprises 309 residues: MTHTTVLLNEAVDALFCNPDATADASATGAQVYVDATFGRGGHSRLILSRMTPTDRLIAFDKDAEALVEAGNIHDSRFSIRHQGFSHLDELPPASVAGVLLDLGISSPQIDNPARGFSFRFEGPLDMRMDTTRGISVAQWLANAETEKIAEVIRDYGEERFAGPIAKAIVARRQERGPISSTTELAQLVADTVKTREPGQNPATRTFQAFRIFINAELEELQQALAASLLVLAPGGRLVVISFHSLEDRIVKQFIAQHSRDVYDRRAPFAPPKVMQLKALARLRPSAAEVSANPRARSAIMRVAQRTAS.

S-adenosyl-L-methionine-binding positions include glycine 41–histidine 43, aspartate 61, phenylalanine 85, aspartate 102, and glutamine 109.

It belongs to the methyltransferase superfamily. RsmH family.

It is found in the cytoplasm. It catalyses the reaction cytidine(1402) in 16S rRNA + S-adenosyl-L-methionine = N(4)-methylcytidine(1402) in 16S rRNA + S-adenosyl-L-homocysteine + H(+). Functionally, specifically methylates the N4 position of cytidine in position 1402 (C1402) of 16S rRNA. The polypeptide is Ribosomal RNA small subunit methyltransferase H (Albidiferax ferrireducens (strain ATCC BAA-621 / DSM 15236 / T118) (Rhodoferax ferrireducens)).